A 527-amino-acid polypeptide reads, in one-letter code: GMP synthase [glutamine-hydrolyzing] (527 aa).

The region spanning 4-202 (KILILDFGSQ…VLQICGARAD (199 aa)) is the Glutamine amidotransferase type-1 domain. The active-site Nucleophile is the C81. Catalysis depends on residues H176 and E178. The GMPS ATP-PPase domain occupies 203–395 (WEMGNYIDEA…LGLPPAMVYR (193 aa)). 230 to 236 (SGGVDSS) is a binding site for ATP.

Homodimer.

It carries out the reaction XMP + L-glutamine + ATP + H2O = GMP + L-glutamate + AMP + diphosphate + 2 H(+). The protein operates within purine metabolism; GMP biosynthesis; GMP from XMP (L-Gln route): step 1/1. Catalyzes the synthesis of GMP from XMP. The chain is GMP synthase [glutamine-hydrolyzing] from Paraburkholderia phytofirmans (strain DSM 17436 / LMG 22146 / PsJN) (Burkholderia phytofirmans).